A 118-amino-acid chain; its full sequence is Large ribosomal subunit protein bL20 (118 aa).

This sequence belongs to the bacterial ribosomal protein bL20 family.

Functionally, binds directly to 23S ribosomal RNA and is necessary for the in vitro assembly process of the 50S ribosomal subunit. It is not involved in the protein synthesizing functions of that subunit. The sequence is that of Large ribosomal subunit protein bL20 from Tolumonas auensis (strain DSM 9187 / NBRC 110442 / TA 4).